Consider the following 264-residue polypeptide: 3-methyl-2-oxobutanoate hydroxymethyltransferase (264 aa).

Residues Asp-45 and Asp-84 each coordinate Mg(2+). Residues Asp-45–Ser-46, Asp-84, and Lys-112 contribute to the 3-methyl-2-oxobutanoate site. Glu-114 provides a ligand contact to Mg(2+). The Proton acceptor role is filled by Glu-181.

This sequence belongs to the PanB family. In terms of assembly, homodecamer; pentamer of dimers. Requires Mg(2+) as cofactor.

Its subcellular location is the cytoplasm. The enzyme catalyses 3-methyl-2-oxobutanoate + (6R)-5,10-methylene-5,6,7,8-tetrahydrofolate + H2O = 2-dehydropantoate + (6S)-5,6,7,8-tetrahydrofolate. It participates in cofactor biosynthesis; (R)-pantothenate biosynthesis; (R)-pantoate from 3-methyl-2-oxobutanoate: step 1/2. Its function is as follows. Catalyzes the reversible reaction in which hydroxymethyl group from 5,10-methylenetetrahydrofolate is transferred onto alpha-ketoisovalerate to form ketopantoate. This Shigella sonnei (strain Ss046) protein is 3-methyl-2-oxobutanoate hydroxymethyltransferase.